The following is a 254-amino-acid chain: C-X-C motif chemokine 16 (254 aa).

The N-terminal stretch at 1–29 (MGRDLRPGSRVLLLLLLLLLVYLTQPGNG) is a signal peptide. Residues 30–205 (NEGSVTGSCY…AGPTARTSAT (176 aa)) lie on the Extracellular side of the membrane. The segment at 32-107 (GSVTGSCYCG…DLKECGHAYS (76 aa)) is chemokine. 2 cysteine pairs are disulfide-bonded: cysteine 38-cysteine 68 and cysteine 40-cysteine 82. A disordered region spans residues 146–165 (QSTQRPTLPVGSLSSDKELT). N-linked (GlcNAc...) asparagine glycosylation is present at asparagine 168. The segment at 178–200 (SLAAGPEAGENQKQPEKNAGPTA) is disordered. A helical membrane pass occupies residues 206 to 226 (VPVLCLLAIIFILTAALSYVL). The Cytoplasmic segment spans residues 227–254 (CKRRRGQSPQSSPDLPVHYIPVAPDSNT). Residues 231–254 (RGQSPQSSPDLPVHYIPVAPDSNT) are disordered.

The protein belongs to the intercrine alpha (chemokine CxC) family. In terms of processing, glycosylated. In terms of tissue distribution, expressed in T-cell areas. Expressed in spleen, lymph nodes, lung, kidney, small intestine and thymus. Weak expression in heart and liver and no expression in brain and bone marrow.

It localises to the cell membrane. The protein localises to the secreted. In terms of biological role, acts as a scavenger receptor on macrophages, which specifically binds to OxLDL (oxidized low density lipoprotein), suggesting that it may be involved in pathophysiology such as atherogenesis. Induces a strong chemotactic response. Induces calcium mobilization. Binds to CXCR6/Bonzo. This Homo sapiens (Human) protein is C-X-C motif chemokine 16 (CXCL16).